An 857-amino-acid chain; its full sequence is Facilitated trehalose transporter Tret1-1 (857 aa).

2 disordered regions span residues 1-28 and 62-203; these read MSGRDSRGAGGGGGGHQPLSNAMGKLKE and DPFL…KATS. Residues 1–392 lie on the Cytoplasmic side of the membrane; sequence MSGRDSRGAG…VYRPTTNPIY (392 aa). Residues 69–81 show a composition bias toward polar residues; sequence VSPQRHPQNTVRT. Residues 134–143 show a composition bias toward basic and acidic residues; sequence EIREHRDRQQ. Over residues 171 to 181 the composition is skewed to polar residues; the sequence is GNSNTNSNKAA. Ser248, Ser249, Ser250, Ser320, and Ser322 each carry phosphoserine. Residues 327-346 form a disordered region; sequence LTSRQHFQQQRSISTDSRKS. Polar residues predominate over residues 330-341; the sequence is RQHFQQQRSIST. The chain crosses the membrane as a helical span at residues 393 to 413; it reads IWTQVLAALSVSLGSLVVGFV. The Extracellular portion of the chain corresponds to 414–440; it reads SAYTSPALVSMTDRNITSFEVTQDAGS. N-linked (GlcNAc...) asparagine glycosylation is present at Asn428. A helical transmembrane segment spans residues 441–461; that stretch reads WVGGIMPLAGLAGGIAGGPLI. Topologically, residues 462–473 are cytoplasmic; that stretch reads EYLGRRNTILAT. Residues 474 to 494 form a helical membrane-spanning segment; it reads AVPFIVSSLLIACAVNVAMVL. Over 495-497 the chain is Extracellular; it reads CGR. Residues 498-518 form a helical membrane-spanning segment; the sequence is FLAGFCVGIASLSLPVYLGET. The Cytoplasmic segment spans residues 519 to 528; the sequence is VQPEVRGTLG. A helical transmembrane segment spans residues 529-549; that stretch reads LLPTAFGNIGILLCFVAGSFM. The N-linked (GlcNAc...) asparagine glycan is linked to Asn550. The Extracellular segment spans residues 550-552; it reads NWS. Residues 553–573 traverse the membrane as a helical segment; the sequence is MLAFLGAALPVPFLILMFLIP. Over 574–636 the chain is Cytoplasmic; that stretch reads ETPRWFVGRG…ELFKRINLKP (63 aa). A helical membrane pass occupies residues 637–657; it reads LSISLGLMFFQQFSGINAVIF. The Extracellular portion of the chain corresponds to 658 to 673; that stretch reads YTVQIFKDAGSTIDSN. Residues 674 to 694 form a helical membrane-spanning segment; it reads LCTIIVGIVNFFATFMGILLI. The Cytoplasmic portion of the chain corresponds to 695–700; the sequence is DRLGRK. A helical transmembrane segment spans residues 701-721; the sequence is ILLYISDIAMILTLSILGGFF. At 722-740 the chain is on the extracellular side; the sequence is YCKAHGPDVSHLGWLPLTC. Residues 741–761 form a helical membrane-spanning segment; it reads FVIYILGFSLGFGPIPWLMMG. The Cytoplasmic segment spans residues 762–770; it reads EILPAKIRG. A helical membrane pass occupies residues 771-791; sequence PAASVVTAFNWFCTFVVTKTF. Over 792–801 the chain is Extracellular; it reads QDLTGAMGAH. A helical membrane pass occupies residues 802–822; it reads GAFWLFGAICFVGLFFVIIYV. Over 823–857 the chain is Cytoplasmic; that stretch reads PETQGKTLEDIERKMMGRVRRMSSVANIKPLSFNM. Phosphoserine is present on residues Ser845 and Ser846.

The protein belongs to the major facilitator superfamily. Sugar transporter (TC 2.A.1.1) family. Trehalose transporter subfamily.

The protein resides in the cell membrane. Low-capacity facilitative transporter for trehalose. Does not transport maltose, sucrose or lactose. Mediates the bidirectional transfer of trehalose. Responsible for the transport of trehalose synthesized in the fat body and the incorporation of trehalose into other tissues that require a carbon source, thereby regulating trehalose levels in the hemolymph. This chain is Facilitated trehalose transporter Tret1-1, found in Drosophila simulans (Fruit fly).